A 61-amino-acid chain; its full sequence is U-poneritoxin(01)-Om5b (61 aa).

A signal peptide spans 1-23; sequence MKLSALSLAFAIILMMTIMYTKA. A propeptide spanning residues 24 to 41 is cleaved from the precursor; the sequence is DADASADAEADADAEAEA. Q59 bears the Glutamine amide mark.

The protein belongs to the formicidae venom precursor-01 superfamily. In terms of processing, truncated sequences of this peptide have also been found in the venom. It is possible they have been cleaved in the venom. As to expression, expressed by the venom gland.

It localises to the secreted. Its function is as follows. Acidic peptide with potent hemolytic activities. It also shows low antimicrobial activities against E.coli (MIC=50uM), as well as histamine-releasing activity (28.3% at 10 uM). Does not have activity against S.aureus, and S.cerevisiae. In Odontomachus monticola (Trap-jaw ant), this protein is U-poneritoxin(01)-Om5b.